A 403-amino-acid polypeptide reads, in one-letter code: S-adenosylmethionine synthase (403 aa).

His17 is a binding site for ATP. Asp19 contacts Mg(2+). Glu45 lines the K(+) pocket. Positions 58 and 104 each coordinate L-methionine. The interval 104-114 is flexible loop; sequence QSPDIAQGVDT. Residues 179–181, 250–251, Asp259, 265–266, Ala282, and Lys286 contribute to the ATP site; these read DGK, KF, and RK. L-methionine is bound at residue Asp259. L-methionine is bound at residue Lys290.

It belongs to the AdoMet synthase family. Homotetramer; dimer of dimers. It depends on Mg(2+) as a cofactor. K(+) is required as a cofactor.

Its subcellular location is the cytoplasm. The enzyme catalyses L-methionine + ATP + H2O = S-adenosyl-L-methionine + phosphate + diphosphate. Its pathway is amino-acid biosynthesis; S-adenosyl-L-methionine biosynthesis; S-adenosyl-L-methionine from L-methionine: step 1/1. Its function is as follows. Catalyzes the formation of S-adenosylmethionine (AdoMet) from methionine and ATP. The overall synthetic reaction is composed of two sequential steps, AdoMet formation and the subsequent tripolyphosphate hydrolysis which occurs prior to release of AdoMet from the enzyme. This chain is S-adenosylmethionine synthase, found in Mycolicibacterium paratuberculosis (strain ATCC BAA-968 / K-10) (Mycobacterium paratuberculosis).